The following is a 479-amino-acid chain: MKNNNSSSVSIENHPWKKKPTTLLLFLSLLSISLLLLRLSQDKIILITTTKTTATTGTDHQRSHKSSEDDTCLGRYIYIHNLPSRFNLEIIKDCKSITRPKDKISMCKYLDNSGFGPLIGGKSSDYSPSWYATNQFMLEVIFHEKMKSYECLTRNSSLASAIYVPYYAGLDFRRHLRRRNVAARDAAGKELVKWLKKQPQWKDMSGKNHFLVTGRISRDFRRNSGSRSAWGTNFMLLSESLNLTFLSIERSLTSHNEFAIPYPTYFHPTSTPEILQWQEKIRLTNRTVLFSFAGAQRPSRNQNGVVRTEVIKQCKSSSKTCRFLDCDVNANSCDDPISLMKLFESSTFCLQPPGDSLTRKSVFDSILAGCIPVFFNQGSAYKQYLWHIPKNSSKYSVYITVKELRTGGKNKIEEILRGIPNERVVGMRENVIRLIPKIVYAKPNRNKPDGEILEDSFDVAVKGVLERIEGIRRNEFKTD.

Topologically, residues 1–20 are cytoplasmic; sequence MKNNNSSSVSIENHPWKKKP. Residues 21-40 form a helical; Signal-anchor for type II membrane protein membrane-spanning segment; sequence TTLLLFLSLLSISLLLLRLS. Residues 41 to 479 are Lumenal-facing; it reads QDKIILITTT…GIRRNEFKTD (439 aa). 4 N-linked (GlcNAc...) asparagine glycosylation sites follow: Asn-155, Asn-242, Asn-285, and Asn-391.

This sequence belongs to the glycosyltransferase 47 family. As to expression, expressed in roots, hypocotyls, cotyledons, leaves, stems and sepals.

It localises to the golgi apparatus membrane. Functionally, functions in xyloglucan synthesis by adding side chains to the xylosylated glucan backbone. Involved in the galactosylation of hemicellulose xyloglucan. The sequence is that of Probable xyloglucan galactosyltransferase GT15 from Arabidopsis thaliana (Mouse-ear cress).